We begin with the raw amino-acid sequence, 500 residues long: Palmitoleoyl-protein carboxylesterase notum1a (500 aa).

Residues 1-26 (MKRSLWVMQVLHWAVMLALVQCGALG) form the signal peptide. Asparagine 101 carries N-linked (GlcNAc...) asparagine glycosylation. Residues serine 237, aspartate 344, and histidine 393 each act as charge relay system in the active site.

It belongs to the pectinacetylesterase family. Notum subfamily.

It localises to the secreted. It catalyses the reaction [Wnt protein]-O-(9Z)-hexadecenoyl-L-serine + H2O = [Wnt protein]-L-serine + (9Z)-hexadecenoate + H(+). Carboxylesterase that acts as a key negative regulator of the Wnt signaling pathway. Acts by specifically mediating depalmitoleoylation of WNT proteins. Serine palmitoleoylation of WNT proteins is required for efficient binding to frizzled receptors. This Danio rerio (Zebrafish) protein is Palmitoleoyl-protein carboxylesterase notum1a.